Reading from the N-terminus, the 456-residue chain is Cell cycle checkpoint control protein Rad9 (456 aa).

Positions 300–302 (KRK) match the Nuclear localization signal motif.

Belongs to the rad9 family. In terms of assembly, component of the 9-1-1 checkpoint clamp complex consisting of Rad9 isoform A, Rad1 and Hus1-like; the interaction with Hus1-like is direct. Does not interact directly with Rad1; this interaction is probably mediated by Hus1-like. This complex probably also forms with Rad9 isoform B, however 9-1-1 complex containing Rad9 isoform A localizes to the nuclear periphery. Interacts with Brca2. Expressed in ovary.

The protein localises to the nucleus envelope. The protein resides in the nucleus. In terms of biological role, component of the Rad9-Rad1-Hus1 (9-1-1) checkpoint clamp complex. Targets the 9-1-1 complex to the nuclear periphery. Targeting to the nuclear periphery is disrupted in the presence of persistent double stranded break DNA damage, possibly as a function of the meiotic checkpoint. This Drosophila melanogaster (Fruit fly) protein is Cell cycle checkpoint control protein Rad9.